Reading from the N-terminus, the 232-residue chain is Large ribosomal subunit protein uL1 (232 aa).

Belongs to the universal ribosomal protein uL1 family. In terms of assembly, part of the 50S ribosomal subunit.

In terms of biological role, binds directly to 23S rRNA. The L1 stalk is quite mobile in the ribosome, and is involved in E site tRNA release. Protein L1 is also a translational repressor protein, it controls the translation of the L11 operon by binding to its mRNA. The sequence is that of Large ribosomal subunit protein uL1 from Stenotrophomonas maltophilia (strain K279a).